Here is a 338-residue protein sequence, read N- to C-terminus: UPF0252 protein PF1496 (338 aa).

A helical transmembrane segment spans residues 100–120 (ILSMLFLVFILFPAFTSHIWS).

Belongs to the UPF0252 family.

Its subcellular location is the membrane. The chain is UPF0252 protein PF1496 from Pyrococcus furiosus (strain ATCC 43587 / DSM 3638 / JCM 8422 / Vc1).